The following is a 966-amino-acid chain: Muscular LMNA-interacting protein (966 aa).

Serine 129 is modified (phosphoserine). 8 disordered regions span residues 132–154 (EDEATCRQGEQGPPGATGNIATR), 182–207 (SHPEIPHGIAPQQKHGQLTSPTTSEQ), 303–337 (LAPEAQKKVSTSSALNPREDVRTSPSPASGASLRS), 354–388 (PSPKPLTSSSHGSLSTVCSQTSSSGNLSKSGLKSP), 434–562 (IKQT…TRPS), 597–684 (KRTC…TPSL), 785–837 (SMHS…SQLT), and 929–966 (SLRDEQEKSPTLLSQDTYNKPGHPMVTIPEHDTLDSKE). The interval 144–810 (PPGATGNIAT…GSETIKTPTT (667 aa)) is required for interaction with ISL1. 2 stretches are compositionally biased toward polar residues: residues 195–207 (KHGQLTSPTTSEQ) and 325–337 (TSPSPASGASLRS). 3 stretches are compositionally biased toward low complexity: residues 354–387 (PSPKPLTSSSHGSLSTVCSQTSSSGNLSKSGLKS), 437–455 (TPSTPKKSLSSCSLTTGST), and 478–497 (PLSQAQPPSPPALASSSYAA). Serine 486 is modified (phosphoserine). Residues 507–521 (TLRSSTTPPQSQTDL) are compositionally biased toward polar residues. Basic and acidic residues-rich tracts occupy residues 542–555 (GRKDGDLRAPEKNR) and 597–607 (KRTCSQRHSDQ). 2 stretches are compositionally biased toward polar residues: residues 639 to 649 (SSLTQALQRSP) and 657 to 684 (GSATCPSRTGMPDSTASNRSSRVSTPSL). The segment covering 785–797 (SMHSSDSPSRPSQ) has biased composition (low complexity). Serine 791 carries the post-translational modification Phosphoserine. Over residues 798–810 (TMLGSETIKTPTT) the composition is skewed to polar residues. Residues 825–834 (SSSSSTTSES) show a composition bias toward low complexity. The span at 937-946 (SPTLLSQDTY) shows a compositional bias: polar residues. Over residues 957–966 (PEHDTLDSKE) the composition is skewed to basic and acidic residues.

Directly interacts with LMNA. Interacts with ISL1 (via N-terminal domain); the interaction represses ISL1 transactivator activity. Interactions of ISL1 with MLIP1 and GCN5/KAT2A may be mutually exclusive. As to expression, expressed in cardiomyoctes. Expression is highly reduced in hypertrophic cardiomyocytes.

Its subcellular location is the nucleus. The protein localises to the nucleus envelope. It localises to the PML body. The protein resides in the cytoplasm. It is found in the cytosol. Its subcellular location is the cell membrane. The protein localises to the sarcolemma. Required for myoblast differentiation into myotubes, possibly acting as a transcriptional regulator of the myogenic program. Required for cardiac adaptation to stress through integrated regulation of the AKT/mTOR pathways and FOXO1. Regulates cardiac homeostasis and plays a role in the protection against cardiac hypertrophy. Binds chromatin. May act as a transcriptional cofactor for ISL1, repressing its transcriptional activity. May also repress MYOCD transcriptional activity. The sequence is that of Muscular LMNA-interacting protein from Rattus norvegicus (Rat).